Consider the following 39-residue polypeptide: Potassium channel toxin alpha-KTx 2.9 (39 aa).

Intrachain disulfides connect Cys-7/Cys-29, Cys-13/Cys-34, and Cys-17/Cys-36. Asparagine amide is present on Asn-39.

Belongs to the short scorpion toxin superfamily. Potassium channel inhibitor family. Alpha-KTx 02 subfamily. In terms of tissue distribution, expressed by the venom gland.

The protein resides in the secreted. Its function is as follows. Blocks Kv1.3/KCNA3 voltage-gated potassium channels of human T-lymphocytes (Kd=0.25 nM). The chain is Potassium channel toxin alpha-KTx 2.9 from Centruroides elegans (Bark scorpion).